The chain runs to 308 residues: Olfactory receptor 5H19 (308 aa).

Residues 1–27 (MEKNATLLTEFVLTGLSHQPLWNIPLF) are Extracellular-facing. N-linked (GlcNAc...) asparagine glycosylation is present at Asn-4. The chain crosses the membrane as a helical span at residues 28–48 (LVFLVIYLITIVGNVSLITLI). Residues 49 to 55 (WTDPHLH) are Cytoplasmic-facing. A helical membrane pass occupies residues 56–76 (IPMYLFLGSLAFVDTSISSIV). The Extracellular portion of the chain corresponds to 77–92 (VPKMLLNFFGKSKVIT). Residues 93–113 (LSECMAQFFLFNISATTECFL) traverse the membrane as a helical segment. Cysteines 96 and 188 form a disulfide. Topologically, residues 114–143 (LAAMAYDRYVAICKPLLYPVVMTNGLCVWL) are cytoplasmic. The chain crosses the membrane as a helical span at residues 144-164 (IALSFVAGIIHALIHEGFLLR). The Extracellular portion of the chain corresponds to 165-197 (LTFCNSNMIHNFYCDIISLLKISCTDTSLNYLI). The helical transmembrane segment at 198–218 (VFIFSGSIQVFTISTILVSYT) threads the bilayer. Topologically, residues 219–238 (IILFTILKKKSAKGIKKAFS) are cytoplasmic. Residues 239–259 (TCGAHLLSVSLYYGPLLFMYV) form a helical membrane-spanning segment. Residues 260–270 (HPASSEVDDQD) lie on the Extracellular side of the membrane. The chain crosses the membrane as a helical span at residues 271–291 (MIDSLFYTVIIPVLNPIIYSL). The Cytoplasmic portion of the chain corresponds to 292-308 (RNKQVIDSLAKFLKRNV).

The protein belongs to the G-protein coupled receptor 1 family.

It is found in the cell membrane. Functionally, potential odorant receptor. This chain is Olfactory receptor 5H19, found in Mus musculus (Mouse).